The chain runs to 124 residues: Fluoride-specific ion channel FluC (124 aa).

Transmembrane regions (helical) follow at residues 4 to 24 (VLLV…ISIF), 35 to 55 (FGTL…YALG), 60 to 80 (ISPE…TTFS), and 95 to 115 (WLKA…MVYL). Residues glycine 74 and threonine 77 each contribute to the Na(+) site.

Belongs to the fluoride channel Fluc/FEX (TC 1.A.43) family.

It localises to the cell inner membrane. The enzyme catalyses fluoride(in) = fluoride(out). Its activity is regulated as follows. Na(+) is not transported, but it plays an essential structural role and its presence is essential for fluoride channel function. In terms of biological role, fluoride-specific ion channel. Important for reducing fluoride concentration in the cell, thus reducing its toxicity. This Shewanella putrefaciens (strain CN-32 / ATCC BAA-453) protein is Fluoride-specific ion channel FluC.